Consider the following 337-residue polypeptide: Phospholipase A1 1 (337 aa).

An N-terminal signal peptide occupies residues 1-21 (MNFKYSILFICFVKVLDNCYA). Positions 22–35 (ADDLTTLRNGTLDR) are excised as a propeptide. Residues cysteine 41 and cysteine 124 are joined by a disulfide bond. Catalysis depends on serine 174, which acts as the Nucleophile. The active-site Charge relay system is the aspartate 202. 2 disulfide bridges follow: cysteine 213/cysteine 218 and cysteine 256/cysteine 261. Histidine 263 serves as the catalytic Charge relay system. 3 disulfide bridges follow: cysteine 278-cysteine 305, cysteine 279-cysteine 330, and cysteine 298-cysteine 303.

It belongs to the AB hydrolase superfamily. Lipase family. In terms of tissue distribution, expressed by the venom gland.

It localises to the secreted. The catalysed reaction is a 1,2-diacyl-sn-glycero-3-phosphocholine + H2O = a 2-acyl-sn-glycero-3-phosphocholine + a fatty acid + H(+). Its function is as follows. Catalyzes the hydrolysis of phosphatidylcholine with phospholipase A1 activity. May act as an allergen and induce hemolytic activity. The chain is Phospholipase A1 1 from Polistes dominula (European paper wasp).